Consider the following 156-residue polypeptide: Endogenous retrovirus group K member 25 Pro protein (156 aa).

The Peptidase A2 domain maps to 21-96 (FEGLVDTGAD…IPLNLWGRDL (76 aa)). The active site involves D26. Residues 111 to 156 (YSPTSQKIMTKMGYIPGKGLGKNEDGIKIPVEAKINQKREGIGYPF) form the G-patch domain.

It belongs to the peptidase A2 family. HERV class-II K(HML-2) subfamily. Active as a homodimer. Autoproteolytically processed at the N-terminus. Expected C-terminal autoprocessing not detected. The sequence shown is that of the processed Pro protein.

It carries out the reaction Processing at the authentic HIV-1 PR recognition site and release of the mature p17 matrix and the p24 capsid protein, as a result of the cleavage of the -SQNY-|-PIVQ- cleavage site.. Functionally, retroviral proteases have roles in processing of the primary translation products and the maturation of the viral particle. Endogenous Pro proteins may have kept, lost or modified their original function during evolution. This endogenous protein has retained most of the characteristics of retroviral proteases. In Homo sapiens (Human), this protein is Endogenous retrovirus group K member 25 Pro protein (ERVK-25).